The following is an 88-amino-acid chain: MLDTKFDELMDFPCAFPFKVVGDAHEALTDRVVAVVQKHAPGDYAPTTKASSKGSYYSITIRVTVTSKDHIETLYTELAAIEGVRRVL.

The protein belongs to the UPF0250 family.

This Shewanella putrefaciens (strain CN-32 / ATCC BAA-453) protein is UPF0250 protein Sputcn32_2874.